The sequence spans 617 residues: Glutamine--fructose-6-phosphate aminotransferase [isomerizing] (617 aa).

Cys2 serves as the catalytic Nucleophile; for GATase activity. The 221-residue stretch at 2-222 folds into the Glutamine amidotransferase type-2 domain; the sequence is CGIIGLAFAE…DGEFGWISPE (221 aa). SIS domains are found at residues 293 to 432 and 466 to 607; these read AAGL…EAGR and AASL…PDKP. Lys612 functions as the For Fru-6P isomerization activity in the catalytic mechanism.

In terms of assembly, homodimer.

It localises to the cytoplasm. The enzyme catalyses D-fructose 6-phosphate + L-glutamine = D-glucosamine 6-phosphate + L-glutamate. In terms of biological role, catalyzes the first step in hexosamine metabolism, converting fructose-6P into glucosamine-6P using glutamine as a nitrogen source. In Aeropyrum pernix (strain ATCC 700893 / DSM 11879 / JCM 9820 / NBRC 100138 / K1), this protein is Glutamine--fructose-6-phosphate aminotransferase [isomerizing].